The chain runs to 470 residues: Adenosylhomocysteinase (470 aa).

Positions 61, 136, and 196 each coordinate substrate. NAD(+) is bound at residue 197 to 199 (TTT). K226 and D230 together coordinate substrate. Residues N231, 260–265 (GYGDVG), E283, N318, 339–341 (IGH), and N384 contribute to the NAD(+) site.

This sequence belongs to the adenosylhomocysteinase family. NAD(+) serves as cofactor.

It localises to the cytoplasm. The enzyme catalyses S-adenosyl-L-homocysteine + H2O = L-homocysteine + adenosine. It participates in amino-acid biosynthesis; L-homocysteine biosynthesis; L-homocysteine from S-adenosyl-L-homocysteine: step 1/1. Its function is as follows. May play a key role in the regulation of the intracellular concentration of adenosylhomocysteine. This chain is Adenosylhomocysteinase, found in Aromatoleum aromaticum (strain DSM 19018 / LMG 30748 / EbN1) (Azoarcus sp. (strain EbN1)).